The sequence spans 1099 residues: R3H domain-containing protein 1 (1099 aa).

Positions 111–146 are disordered; it reads SFEKEEKPSKDEAEKEKASDKLPRKMLSRDSSQEYT. Over residues 112-142 the composition is skewed to basic and acidic residues; the sequence is FEKEEKPSKDEAEKEKASDKLPRKMLSRDSS. Residues 168 to 231 enclose the R3H domain; it reads RMMLLKLEQE…SVIVNKTSNT (64 aa). Serine 187 and serine 262 each carry phosphoserine. The region spanning 232-302 is the SUZ domain; sequence RIPDQKFNEH…ARDRIFSQDS (71 aa). The segment at 267–287 is disordered; that stretch reads DNQMRIRLKDDRRSKSIEERE. Serine 302 carries the post-translational modification Phosphoserine. Positions 331-370 are disordered; the sequence is RVNKDASGRSTNSHQSSTENELKYSEPRPWSSTDSDSSLR. 2 stretches are compositionally biased toward polar residues: residues 338-349 and 360-370; these read GRSTNSHQSSTE and WSSTDSDSSLR. Phosphoserine is present on residues serine 380, serine 381, and serine 393. Disordered regions lie at residues 387 to 439, 490 to 537, 583 to 625, and 797 to 825; these read VLTR…SSHG, QTGQ…AANH, YIMT…HPVS, and EQVQ…PPPP. Residues 391–422 show a composition bias toward low complexity; sequence GDSSGSSKSIGRLSKTGSESSGSVGSSTGSLS. 2 stretches are compositionally biased toward pro residues: residues 519-532 and 588-611; these read PGPP…PPQQ and APPP…PGQP. Over residues 797-817 the composition is skewed to polar residues; sequence EQVQFPRTTSPCSSQQLQGHQ. Arginine 929 bears the Asymmetric dimethylarginine; alternate mark. Position 929 is an omega-N-methylarginine; alternate (arginine 929). The interval 941-977 is disordered; it reads PPAVLHGHIPNQQGQPGSRHGNRGRRQAKKAASTDLG. The span at 960–969 shows a compositional bias: basic residues; that stretch reads HGNRGRRQAK. Serine 973 is subject to Phosphoserine.

The chain is R3H domain-containing protein 1 (R3HDM1) from Homo sapiens (Human).